A 1024-amino-acid polypeptide reads, in one-letter code: Multidrug resistance protein MdtC (1024 aa).

A run of 12 helical transmembrane segments spans residues 12–32 (VATTLLTLAITLSGVIGFSLL), 333–353 (EVERSLVIAVALVILVVFLFL), 360–380 (LIPAVAVPVSLIGTFTAMYLC), 387–407 (LSLMALTIATGFVVDDAIVVL), 431–451 (VGFTVLSMSISLVAVFIPLLL), 463–483 (FAVTLSVAIGISLVISLTLTP), 528–548 (WVMVVLLSTIALNVWLYISIP), 853–873 (LWLIMAAIATVYIVLGILYES), 875–895 (VHPLTILSTLPSAGVGALLAL), 897–917 (LFDAPFSLIALIGIMLLIGIV), 953–973 (PILMTTLAALFGALPLVISSG), and 984–1004 (ITIVGGLVMSQLLTLYTTPVV).

The protein belongs to the resistance-nodulation-cell division (RND) (TC 2.A.6) family. MdtC subfamily. As to quaternary structure, part of a tripartite efflux system composed of MdtA, MdtB and MdtC. MdtC forms a heteromultimer with MdtB.

The protein localises to the cell inner membrane. The chain is Multidrug resistance protein MdtC from Yersinia enterocolitica serotype O:8 / biotype 1B (strain NCTC 13174 / 8081).